We begin with the raw amino-acid sequence, 255 residues long: MVFDTHLHTLFSTDSKMNIEEAIDAGEKKNLGIIITEHIDLNYPVKGEFVFDIDKYFKEYNKYRSNKVLLGVEIGMGEEIKEQNKSINDKYEFDYVLGSIHLLNGLDLYEKTIYKSSPKKEVFEMYFKTMLACLRCHEYIDSLAHIDYISRYAAYHDGEIYYNEYSDYIDEVLKFIVDREIVIEINTRRLNKKEVCENLMPIYKRYSELGGRFVTIGSDSHYKDSIGLNFKNALKMAENCNLKPVFFEKRLMKYA.

This sequence belongs to the PHP hydrolase family. HisK subfamily.

The enzyme catalyses L-histidinol phosphate + H2O = L-histidinol + phosphate. It functions in the pathway amino-acid biosynthesis; L-histidine biosynthesis; L-histidine from 5-phospho-alpha-D-ribose 1-diphosphate: step 8/9. In Clostridium acetobutylicum (strain ATCC 824 / DSM 792 / JCM 1419 / IAM 19013 / LMG 5710 / NBRC 13948 / NRRL B-527 / VKM B-1787 / 2291 / W), this protein is Probable histidinol-phosphatase (hisK).